The following is a 243-amino-acid chain: 3-deoxy-manno-octulosonate cytidylyltransferase (243 aa).

This sequence belongs to the KdsB family.

It is found in the cytoplasm. The catalysed reaction is 3-deoxy-alpha-D-manno-oct-2-ulosonate + CTP = CMP-3-deoxy-beta-D-manno-octulosonate + diphosphate. The protein operates within nucleotide-sugar biosynthesis; CMP-3-deoxy-D-manno-octulosonate biosynthesis; CMP-3-deoxy-D-manno-octulosonate from 3-deoxy-D-manno-octulosonate and CTP: step 1/1. Its pathway is bacterial outer membrane biogenesis; lipopolysaccharide biosynthesis. Its function is as follows. Activates KDO (a required 8-carbon sugar) for incorporation into bacterial lipopolysaccharide in Gram-negative bacteria. In Bartonella tribocorum (strain CIP 105476 / IBS 506), this protein is 3-deoxy-manno-octulosonate cytidylyltransferase.